We begin with the raw amino-acid sequence, 129 residues long: uncharacterized protein (129 aa).

Belongs to the asfivirus C129R family.

Its subcellular location is the virion. In terms of biological role, plays a role in the inhibition of type I interferon signaling pathway. Mechanistically, specifically interacts with 2',3'-cGAMP and cleaves it via its phosphodiesterase activity. In turn, prevents 2',3'-cGAMP interaction with host ER-resident STING1 leading to inhibition of downstream signaling pathway and type I interferon production. This is an uncharacterized protein from African swine fever virus (strain Badajoz 1971 Vero-adapted) (Ba71V).